The sequence spans 137 residues: Ribosome-binding factor A (137 aa).

The protein belongs to the RbfA family. Monomer. Binds 30S ribosomal subunits, but not 50S ribosomal subunits or 70S ribosomes.

It is found in the cytoplasm. Its function is as follows. One of several proteins that assist in the late maturation steps of the functional core of the 30S ribosomal subunit. Associates with free 30S ribosomal subunits (but not with 30S subunits that are part of 70S ribosomes or polysomes). Required for efficient processing of 16S rRNA. May interact with the 5'-terminal helix region of 16S rRNA. This Cereibacter sphaeroides (strain KD131 / KCTC 12085) (Rhodobacter sphaeroides) protein is Ribosome-binding factor A.